A 1065-amino-acid chain; its full sequence is Probable arabinosyltransferase B (1065 aa).

Helical transmembrane passes span 15 to 37, 204 to 226, 241 to 263, 394 to 413, 417 to 436, 441 to 463, 510 to 527, 540 to 557, 567 to 589, 596 to 618, 633 to 655, and 667 to 689; these read WVAT…LPVV, LKLA…LWRL, NWRT…HVIG, YSRL…TLGV, GLIA…RILV, VVGT…TVVF, FGFL…FIML, AWRL…LMFT, LFAA…AVLG, AFLA…WWYV, GGIT…AIWL, and LARA…VFIA.

This sequence belongs to the emb family.

The protein resides in the cell membrane. In terms of biological role, arabinosyl transferase responsible for the polymerization of arabinose into the arabinan of arabinogalactan. This Mycobacterium avium protein is Probable arabinosyltransferase B (embB).